Here is a 310-residue protein sequence, read N- to C-terminus: tRNA-cytidine(32) 2-sulfurtransferase (310 aa).

The short motif at 48-53 is the PP-loop motif element; that stretch reads SGGKDS. Residues Cys123, Cys126, and Cys214 each contribute to the [4Fe-4S] cluster site.

The protein belongs to the TtcA family. Homodimer. It depends on Mg(2+) as a cofactor. The cofactor is [4Fe-4S] cluster.

The protein localises to the cytoplasm. It catalyses the reaction cytidine(32) in tRNA + S-sulfanyl-L-cysteinyl-[cysteine desulfurase] + AH2 + ATP = 2-thiocytidine(32) in tRNA + L-cysteinyl-[cysteine desulfurase] + A + AMP + diphosphate + H(+). Its pathway is tRNA modification. Functionally, catalyzes the ATP-dependent 2-thiolation of cytidine in position 32 of tRNA, to form 2-thiocytidine (s(2)C32). The sulfur atoms are provided by the cysteine/cysteine desulfurase (IscS) system. The chain is tRNA-cytidine(32) 2-sulfurtransferase from Vibrio vulnificus (strain CMCP6).